The following is an 82-amino-acid chain: Small ribosomal subunit protein bS18 (82 aa).

This sequence belongs to the bacterial ribosomal protein bS18 family. As to quaternary structure, part of the 30S ribosomal subunit. Forms a tight heterodimer with protein bS6.

Its function is as follows. Binds as a heterodimer with protein bS6 to the central domain of the 16S rRNA, where it helps stabilize the platform of the 30S subunit. The protein is Small ribosomal subunit protein bS18 of Rhizobium meliloti (strain 1021) (Ensifer meliloti).